We begin with the raw amino-acid sequence, 419 residues long: Acetyl transferase GW6a (419 aa).

In terms of domain architecture, N-acetyltransferase spans 12 to 210; that stretch reads VRVREFDVEK…GHPVHAHRLP (199 aa). The tract at residues 44–68 is disordered; the sequence is VHDHADDGDGAAAKEKKKTKTKTKK. Over residues 58–68 the composition is skewed to basic residues; that stretch reads EKKKTKTKTKK.

Belongs to the acetyltransferase family. As to quaternary structure, interacts (via C-terminus) with HDR3 (via N-terminus). Post-translationally, ubiquitinated at Lys-63 by HDR3. Polyubiquitination of GW6A delays its degradation by the 26S proteasome and enhances GW6A histone acetyltransferase activity. Expressed in roots, leaf blades, leaf sheaths, shoot apical meristem and young panicles.

The protein resides in the nucleus. Functionally, possesses intrinsic histone acetyltransferase activity and acts as a positive regulator of grain weight, hull size, yield, and plant biomass. Regulates postitively grain weight and yield by enlarging spikelet hulls via increasing cell number and accelerating grain filling. In vitro, catalyzes the acetylation of histone H4 at Lys-6 (H4K5ac), Lys-13 (H4K12ac) and Lys-17 (H4K16ac). Involved in the regulation of plastochron (the time interval between leaf initiation event). The polypeptide is Acetyl transferase GW6a (Oryza sativa subsp. japonica (Rice)).